The sequence spans 122 residues: UPF0102 protein DIP1513 (122 aa).

The protein belongs to the UPF0102 family.

The protein is UPF0102 protein DIP1513 of Corynebacterium diphtheriae (strain ATCC 700971 / NCTC 13129 / Biotype gravis).